The sequence spans 63 residues: Large ribosomal subunit protein uL29 (63 aa).

It belongs to the universal ribosomal protein uL29 family.

The polypeptide is Large ribosomal subunit protein uL29 (Tolumonas auensis (strain DSM 9187 / NBRC 110442 / TA 4)).